Here is a 159-residue protein sequence, read N- to C-terminus: Pathogenesis-related leaf protein 4 (159 aa).

A signal peptide spans 1 to 24 (MGLFNISLLLTCLMVLAIFHSCEA). Glutamine 25 is modified (pyrrolidone carboxylic acid). The SCP domain maps to 32 to 147 (LAVHNDARAQ…NGWWFISCNY (116 aa)). Cystine bridges form between cysteine 68-cysteine 136, cysteine 109-cysteine 115, and cysteine 131-cysteine 145.

The protein belongs to the CRISP family.

Its function is as follows. Probably involved in the defense reaction of plants against pathogens. The polypeptide is Pathogenesis-related leaf protein 4 (Solanum lycopersicum (Tomato)).